Here is a 72-residue protein sequence, read N- to C-terminus: UPF0352 protein NTHI1007 (72 aa).

The protein belongs to the UPF0352 family.

The sequence is that of UPF0352 protein NTHI1007 from Haemophilus influenzae (strain 86-028NP).